We begin with the raw amino-acid sequence, 365 residues long: Chorismate synthase (365 aa).

Residues R48 and R54 each coordinate NADP(+). FMN contacts are provided by residues 131–133, 243–244, G288, 303–307, and R329; these read RSS, NA, and KPTSS.

The protein belongs to the chorismate synthase family. In terms of assembly, homotetramer. The cofactor is FMNH2.

The enzyme catalyses 5-O-(1-carboxyvinyl)-3-phosphoshikimate = chorismate + phosphate. Its pathway is metabolic intermediate biosynthesis; chorismate biosynthesis; chorismate from D-erythrose 4-phosphate and phosphoenolpyruvate: step 7/7. Its function is as follows. Catalyzes the anti-1,4-elimination of the C-3 phosphate and the C-6 proR hydrogen from 5-enolpyruvylshikimate-3-phosphate (EPSP) to yield chorismate, which is the branch point compound that serves as the starting substrate for the three terminal pathways of aromatic amino acid biosynthesis. This reaction introduces a second double bond into the aromatic ring system. This Rhizobium etli (strain CIAT 652) protein is Chorismate synthase.